The primary structure comprises 295 residues: Protoheme IX farnesyltransferase 2 (295 aa).

The next 9 membrane-spanning stretches (helical) occupy residues 9–29 (ITKP…FFLA), 36–56 (FALF…GCVF), 83–103 (LTLA…LLYV), 108–128 (LAAF…SLWL), 135–155 (GTLV…CAVS), 163–183 (VTLL…IAIF), 209–229 (IVLY…GGYA), 230–250 (GLGY…MAWG), and 264–284 (VFGF…VDSQ).

This sequence belongs to the UbiA prenyltransferase family. Protoheme IX farnesyltransferase subfamily.

It localises to the cell inner membrane. The enzyme catalyses heme b + (2E,6E)-farnesyl diphosphate + H2O = Fe(II)-heme o + diphosphate. The protein operates within porphyrin-containing compound metabolism; heme O biosynthesis; heme O from protoheme: step 1/1. Converts heme B (protoheme IX) to heme O by substitution of the vinyl group on carbon 2 of heme B porphyrin ring with a hydroxyethyl farnesyl side group. In Pseudomonas entomophila (strain L48), this protein is Protoheme IX farnesyltransferase 2.